The chain runs to 129 residues: UPF0325 protein YE3288 (129 aa).

Belongs to the UPF0325 family.

The chain is UPF0325 protein YE3288 from Yersinia enterocolitica serotype O:8 / biotype 1B (strain NCTC 13174 / 8081).